Consider the following 142-residue polypeptide: Alpha-lactalbumin (142 aa).

The first 19 residues, 1–19, serve as a signal peptide directing secretion; sequence MMSFVSLLLVGILFHATQA. A C-type lysozyme domain is found at 20–142; it reads EQLTKCEVFR…KLDQWLCEKL (123 aa). 4 disulfides stabilise this stretch: Cys-25-Cys-139, Cys-47-Cys-130, Cys-80-Cys-96, and Cys-92-Cys-110. Asn-64 carries an N-linked (GlcNAc...) asparagine glycan. 5 residues coordinate Ca(2+): Lys-98, Asp-101, Asp-103, Asp-106, and Asp-107.

The protein belongs to the glycosyl hydrolase 22 family. In terms of assembly, lactose synthase (LS) is a heterodimer of a catalytic component, beta1,4-galactosyltransferase (beta4Gal-T1) and a regulatory component, alpha-lactalbumin (LA). In terms of tissue distribution, mammary gland specific. Secreted in milk.

Its subcellular location is the secreted. Its function is as follows. Regulatory subunit of lactose synthase, changes the substrate specificity of galactosyltransferase in the mammary gland making glucose a good acceptor substrate for this enzyme. This enables LS to synthesize lactose, the major carbohydrate component of milk. In other tissues, galactosyltransferase transfers galactose onto the N-acetylglucosamine of the oligosaccharide chains in glycoproteins. The sequence is that of Alpha-lactalbumin (LALBA) from Bos taurus (Bovine).